The primary structure comprises 948 residues: Probable DNA-directed RNA polymerase (948 aa).

Catalysis depends on residues aspartate 600, lysine 680, and aspartate 853.

It belongs to the phage and mitochondrial RNA polymerase family.

It is found in the mitochondrion. The enzyme catalyses RNA(n) + a ribonucleoside 5'-triphosphate = RNA(n+1) + diphosphate. DNA-dependent RNA polymerase catalyzes the transcription of DNA into RNA using the four ribonucleoside triphosphates as substrates. The polypeptide is Probable DNA-directed RNA polymerase (Podospora anserina (Pleurage anserina)).